The sequence spans 462 residues: Exodeoxyribonuclease 7 large subunit (462 aa).

The protein belongs to the XseA family. In terms of assembly, heterooligomer composed of large and small subunits.

It is found in the cytoplasm. The catalysed reaction is Exonucleolytic cleavage in either 5'- to 3'- or 3'- to 5'-direction to yield nucleoside 5'-phosphates.. Its function is as follows. Bidirectionally degrades single-stranded DNA into large acid-insoluble oligonucleotides, which are then degraded further into small acid-soluble oligonucleotides. The chain is Exodeoxyribonuclease 7 large subunit from Pectobacterium carotovorum subsp. carotovorum (strain PC1).